The sequence spans 226 residues: MSFTGTLDKCKACDKTVYVMDLLTLEGNTYHKSCFRCTHCKGTLVISNYSSMDGVLYCKPHFEQLFKESGNYSKNFQAGKTEKPNDHLTRTPSKLSSFFSGTQDKCATCKKTVYPLEKVTMEGESYHKTCFRCTHSGCPLTHSSYASLNGVLYCKVHFNQLFLEKGSYNHVHQAAANHRRSASSGGASPPSDDHKPDDTASIPEAKEDDAAPEAAGEEEPEPVVES.

2 LIM zinc-binding domains span residues 8–68 and 104–164; these read DKCK…LFKE and DKCA…LFLE. The interval 173-226 is disordered; the sequence is QAAANHRRSASSGGASPPSDDHKPDDTASIPEAKEDDAAPEAAGEEEPEPVVES. The segment covering 191-209 has biased composition (basic and acidic residues); that stretch reads SDDHKPDDTASIPEAKEDD. Residues 210–226 are compositionally biased toward acidic residues; the sequence is AAPEAAGEEEPEPVVES.

Interacts with F-actin. As to expression, predominantly expressed in flowers, in the tapetum and in pollen grains. Detected in leaves and stems.

The protein localises to the cytoplasm. Its subcellular location is the cytoskeleton. Binds to actin filaments and promotes cross-linking into thick bundles. Has an actin-stabilizing activity. The actin regulatory activities are inhibited by pH &gt; 6.8 but are [Ca(2+)] independent. The polypeptide is LIM domain-containing protein PLIM2a (Arabidopsis thaliana (Mouse-ear cress)).